Here is a 697-residue protein sequence, read N- to C-terminus: Elongation factor G (697 aa).

A tr-type G domain is found at 8–290 (ERYRNFGIMA…AVVDYLPSPL (283 aa)). GTP contacts are provided by residues 17–24 (AHIDAGKT), 88–92 (DTPGH), and 142–145 (NKLD).

This sequence belongs to the TRAFAC class translation factor GTPase superfamily. Classic translation factor GTPase family. EF-G/EF-2 subfamily.

It is found in the cytoplasm. Functionally, catalyzes the GTP-dependent ribosomal translocation step during translation elongation. During this step, the ribosome changes from the pre-translocational (PRE) to the post-translocational (POST) state as the newly formed A-site-bound peptidyl-tRNA and P-site-bound deacylated tRNA move to the P and E sites, respectively. Catalyzes the coordinated movement of the two tRNA molecules, the mRNA and conformational changes in the ribosome. In Sphingopyxis alaskensis (strain DSM 13593 / LMG 18877 / RB2256) (Sphingomonas alaskensis), this protein is Elongation factor G.